Here is a 509-residue protein sequence, read N- to C-terminus: Apurinic-apyrimidinic endonuclease 1 (509 aa).

Positions 1–24 (MPRHCCCFVFHFLLYMLLINIVKN) are cleaved as a signal peptide. Positions 144-188 (EEKDEECDEKTKQDNNKENIKNETIVQKKKIDKNNKTKEKIKTKS) are disordered. 2 stretches are compositionally biased toward basic and acidic residues: residues 152 to 164 (EKTK…ENIK) and 175 to 188 (DKNN…KTKS). 9 residues coordinate Zn(2+): H291, H331, E367, D401, H404, H438, D451, H453, and E483. H404 serves as a coordination point for Mn(2+). Mn(2+) is bound by residues D451 and H453.

The protein belongs to the AP endonuclease 2 family. Zn(2+) serves as cofactor. The cofactor is Mn(2+). May be proteolytically cleaved.

It is found in the mitochondrion. Functionally, plays a role in mitochondrial DNA base excision repair (BER) pathway induced by oxidative stress. Has apurinic/apyrimidinic (AP) endonuclease activity towards double-stranded DNA (dsDNA) with a preference for C as opposite base. Has 3'-phosphatase activity; removes 3'-phosphate from blunt-end, recessed, and gapped DNA templates and thus, removes 3'-blocks for DNA polymerase activity during BER. Lacks 3'-5' exonuclease activity and does not cleave damaged bases by nucleotide incision repair (NIR). The chain is Apurinic-apyrimidinic endonuclease 1 from Plasmodium berghei (strain Anka).